A 471-amino-acid chain; its full sequence is Putative multidrug resistance protein MdtD (471 aa).

Residues M1–Q11 are Periplasmic-facing. The chain crosses the membrane as a helical span at residues L12–A32. Residues L33–H48 are Cytoplasmic-facing. The chain crosses the membrane as a helical span at residues M49–A69. The Periplasmic segment spans residues D70–N76. Residues I77–T97 traverse the membrane as a helical segment. Residues L98–L101 lie on the Cytoplasmic side of the membrane. The helical transmembrane segment at L102 to M124 threads the bilayer. Residues K125–T137 are Periplasmic-facing. The chain crosses the membrane as a helical span at residues F138–V158. Over E159–H164 the chain is Cytoplasmic. A helical transmembrane segment spans residues W165–M185. Residues P186–D196 are Periplasmic-facing. The helical transmembrane segment at L197 to S217 threads the bilayer. The Cytoplasmic segment spans residues K218–P224. The helical transmembrane segment at L225–A245 threads the bilayer. At R246 to T262 the chain is on the periplasmic side. The helical transmembrane segment at F263–M283 threads the bilayer. The Cytoplasmic segment spans residues T284 to P285. Residues V286–M306 traverse the membrane as a helical segment. At V307 to T341 the chain is on the periplasmic side. The chain crosses the membrane as a helical span at residues L342–L362. Over Q363–S395 the chain is Cytoplasmic. Residues M396–F416 traverse the membrane as a helical segment. Residues G417–T430 are Periplasmic-facing. Residues V431–A451 form a helical membrane-spanning segment. Residues R452–Q471 are Cytoplasmic-facing.

Belongs to the major facilitator superfamily. TCR/Tet family.

Its subcellular location is the cell inner membrane. In Escherichia coli O157:H7, this protein is Putative multidrug resistance protein MdtD.